A 294-amino-acid chain; its full sequence is NAD kinase (294 aa).

Asp-73 (proton acceptor) is an active-site residue. NAD(+) is bound by residues 73-74 (DG), 147-148 (NE), His-158, Arg-175, Asp-177, and 188-193 (TAYALS).

Belongs to the NAD kinase family. The cofactor is a divalent metal cation.

It is found in the cytoplasm. It catalyses the reaction NAD(+) + ATP = ADP + NADP(+) + H(+). In terms of biological role, involved in the regulation of the intracellular balance of NAD and NADP, and is a key enzyme in the biosynthesis of NADP. Catalyzes specifically the phosphorylation on 2'-hydroxyl of the adenosine moiety of NAD to yield NADP. The polypeptide is NAD kinase (Tolumonas auensis (strain DSM 9187 / NBRC 110442 / TA 4)).